A 227-amino-acid chain; its full sequence is PKHD-type hydroxylase BamMC406_5004 (227 aa).

One can recognise a Fe2OG dioxygenase domain in the interval 80–179 (QVYPPLFNRY…RVASFFWVQS (100 aa)). Residues His-98, Asp-100, and His-160 each contribute to the Fe cation site. Position 170 (Arg-170) interacts with 2-oxoglutarate.

It depends on Fe(2+) as a cofactor. Requires L-ascorbate as cofactor.

The sequence is that of PKHD-type hydroxylase BamMC406_5004 from Burkholderia ambifaria (strain MC40-6).